A 705-amino-acid chain; its full sequence is Elongation factor G (705 aa).

One can recognise a tr-type G domain in the interval Glu8 to Ala290. GTP-binding positions include Ala17 to Thr24, Asp88 to His92, and Asn142 to Asp145. The interval Ala290 to Ala309 is disordered.

The protein belongs to the TRAFAC class translation factor GTPase superfamily. Classic translation factor GTPase family. EF-G/EF-2 subfamily.

The protein localises to the cytoplasm. Its function is as follows. Catalyzes the GTP-dependent ribosomal translocation step during translation elongation. During this step, the ribosome changes from the pre-translocational (PRE) to the post-translocational (POST) state as the newly formed A-site-bound peptidyl-tRNA and P-site-bound deacylated tRNA move to the P and E sites, respectively. Catalyzes the coordinated movement of the two tRNA molecules, the mRNA and conformational changes in the ribosome. The chain is Elongation factor G from Xanthomonas euvesicatoria pv. vesicatoria (strain 85-10) (Xanthomonas campestris pv. vesicatoria).